Here is a 230-residue protein sequence, read N- to C-terminus: Probable dual specificity protein phosphatase DDB_G0283417 (230 aa).

In terms of domain architecture, Tyrosine-protein phosphatase spans 78–230; the sequence is NNNYESINLY…LEIFEKELLF (153 aa). Residue Cys174 is the Phosphocysteine intermediate of the active site.

It belongs to the protein-tyrosine phosphatase family. Non-receptor class dual specificity subfamily.

It catalyses the reaction O-phospho-L-tyrosyl-[protein] + H2O = L-tyrosyl-[protein] + phosphate. The enzyme catalyses O-phospho-L-seryl-[protein] + H2O = L-seryl-[protein] + phosphate. The catalysed reaction is O-phospho-L-threonyl-[protein] + H2O = L-threonyl-[protein] + phosphate. Its function is as follows. Has a dual specificity toward Ser/Thr and Tyr-containing proteins. The sequence is that of Probable dual specificity protein phosphatase DDB_G0283417 from Dictyostelium discoideum (Social amoeba).